Consider the following 146-residue polypeptide: 3-dehydroquinate dehydratase (146 aa).

Tyrosine 22 serves as the catalytic Proton acceptor. The substrate site is built by asparagine 73, histidine 79, and aspartate 86. Catalysis depends on histidine 99, which acts as the Proton donor. Residues 100 to 101 (VS) and arginine 110 contribute to the substrate site.

The protein belongs to the type-II 3-dehydroquinase family. Homododecamer.

The enzyme catalyses 3-dehydroquinate = 3-dehydroshikimate + H2O. Its pathway is metabolic intermediate biosynthesis; chorismate biosynthesis; chorismate from D-erythrose 4-phosphate and phosphoenolpyruvate: step 3/7. In terms of biological role, catalyzes a trans-dehydration via an enolate intermediate. The protein is 3-dehydroquinate dehydratase of Kineococcus radiotolerans (strain ATCC BAA-149 / DSM 14245 / SRS30216).